The primary structure comprises 244 residues: INO80 complex subunit E (244 aa).

Residues 10-54 (DYKKKYRNLKRKLKFLIYEHECFQEELRKAQRKLLKVSRDKSFLL) are a coiled coil. The disordered stretch occupies residues 63 to 236 (VDEDSSDSDA…SGDDALDGDD (174 aa)). Residues 99 to 115 (PPLGGAPSPSSLSLPPS) are compositionally biased toward low complexity. Residues 157–171 (RPKREKRPRLPRKLK) are compositionally biased toward basic residues. Glycyl lysine isopeptide (Lys-Gly) (interchain with G-Cter in SUMO2) cross-links involve residues K159 and K171. A compositionally biased stretch (pro residues) spans 202 to 212 (PLPPPKMPPPT).

In terms of assembly, component of the chromatin remodeling INO80 complex; specifically part of a complex module associated with the N-terminus of INO80.

It is found in the nucleus. Putative regulatory component of the chromatin remodeling INO80 complex which is involved in transcriptional regulation, DNA replication and probably DNA repair. The sequence is that of INO80 complex subunit E (INO80E) from Homo sapiens (Human).